A 166-amino-acid polypeptide reads, in one-letter code: 2-C-methyl-D-erythritol 2,4-cyclodiphosphate synthase (166 aa).

Residues Asp12 and His14 each coordinate a divalent metal cation. 4-CDP-2-C-methyl-D-erythritol 2-phosphate contacts are provided by residues 12–14 and 38–39; these read DVH and HS. Residue His46 participates in a divalent metal cation binding. 4-CDP-2-C-methyl-D-erythritol 2-phosphate-binding positions include 60-62, 136-139, Phe143, and Arg146; these read DIG and TTSE.

Belongs to the IspF family. In terms of assembly, homotrimer. The cofactor is a divalent metal cation.

It catalyses the reaction 4-CDP-2-C-methyl-D-erythritol 2-phosphate = 2-C-methyl-D-erythritol 2,4-cyclic diphosphate + CMP. The protein operates within isoprenoid biosynthesis; isopentenyl diphosphate biosynthesis via DXP pathway; isopentenyl diphosphate from 1-deoxy-D-xylulose 5-phosphate: step 4/6. Involved in the biosynthesis of isopentenyl diphosphate (IPP) and dimethylallyl diphosphate (DMAPP), two major building blocks of isoprenoid compounds. Catalyzes the conversion of 4-diphosphocytidyl-2-C-methyl-D-erythritol 2-phosphate (CDP-ME2P) to 2-C-methyl-D-erythritol 2,4-cyclodiphosphate (ME-CPP) with a corresponding release of cytidine 5-monophosphate (CMP). This chain is 2-C-methyl-D-erythritol 2,4-cyclodiphosphate synthase, found in Xanthomonas axonopodis pv. citri (strain 306).